Consider the following 338-residue polypeptide: MASPKDFISPVNSGQKLVYPFRNYLNYLHDKYSDLQTGKIADYIPELALAAPQWFGISVITTDGQIFEVGDCQQTFTVQSISKAFVFGLALEDHGREYVNSKVGVEPTGEAFNSIILDEKTNRPYNPMVNAGAIATTDLITGQNATERLKRILEMFKRYTGRDHEINVPVFLSEKSTGNRNRAMAYLMLNFGMVSDKIEETLDLYCQQCAILVHAHDLALMAATLANGGVNPITGIRAIDEHYVQDVISVMLTCGMYDASGEWAYRVGLPAKSGVGGGITAVVPHQLGIGTFSPLLDEKGNSIRGVKICQNISEDFGLHLFNVAKPERDLKTWLEGNS.

S80, N130, E174, N181, Y205, Y257, and V275 together coordinate substrate.

The protein belongs to the glutaminase family. As to quaternary structure, homotetramer.

It carries out the reaction L-glutamine + H2O = L-glutamate + NH4(+). The chain is Glutaminase from Microcystis aeruginosa (strain NIES-843 / IAM M-2473).